Consider the following 687-residue polypeptide: Protein 4.2 (687 aa).

The N-myristoyl glycine moiety is linked to residue G2. The interval 31–39 (LFVRRGQPF) is band 3 binding. S247 is subject to Phosphoserine.

It belongs to the transglutaminase superfamily. Transglutaminase family. Component of the ankyrin-1 complex in the erythrocyte, composed of ANK1, RHCE, RHAG, SLC4A1, EPB42, GYPA, GYPB and AQP1. Interacts with SLC4A1 (via the cytoplasmic domain); this interaction is mediated by the SLC4A1 Band 3-I dimer. Interacts with ANK1 (via ANK 1-13 repeats). Interacts with AQP1 (via the C-terminal).

The protein localises to the cell membrane. It localises to the cytoplasm. It is found in the cytoskeleton. Component of the ankyrin-1 complex, a multiprotein complex involved in the stability and shape of the erythrocyte membrane. This is Protein 4.2 from Bos taurus (Bovine).